Here is a 446-residue protein sequence, read N- to C-terminus: Nuclear envelope integral membrane protein 1 (446 aa).

Residues methionine 1–glycine 37 form the signal peptide. N-linked (GlcNAc...) asparagine glycosylation is found at asparagine 62, asparagine 118, and asparagine 129. The next 5 membrane-spanning stretches (helical) occupy residues isoleucine 154–serine 174, tyrosine 181–tyrosine 201, proline 209–phenylalanine 229, histidine 239–tyrosine 259, and serine 269–isoleucine 289. Residues leucine 410–isoleucine 431 show a composition bias toward acidic residues. A disordered region spans residues leucine 410–lysine 446. An N-linked (GlcNAc...) asparagine glycan is attached at asparagine 441.

Belongs to the NEMP family.

The protein localises to the nucleus inner membrane. Contributes to nuclear envelope stiffness in germ cells. Involved in male and female fertility. Essential for normal erythropoiesis. Required for efficient nuclear envelope opening and enucleation during the late stages of erythroblast maturation. This Danio rerio (Zebrafish) protein is Nuclear envelope integral membrane protein 1.